A 314-amino-acid chain; its full sequence is Acetaldehyde dehydrogenase 2 (314 aa).

An NAD(+)-binding site is contributed by 15 to 18 (SGNI). C133 functions as the Acyl-thioester intermediate in the catalytic mechanism. Residues 164–172 (SAGPGTRQN) and N289 each bind NAD(+).

This sequence belongs to the acetaldehyde dehydrogenase family.

It carries out the reaction acetaldehyde + NAD(+) + CoA = acetyl-CoA + NADH + H(+). The protein is Acetaldehyde dehydrogenase 2 of Nocardioides sp. (strain ATCC BAA-499 / JS614).